We begin with the raw amino-acid sequence, 617 residues long: Kelch-like protein 9 (617 aa).

In terms of domain architecture, BTB spans Cys50 to Met119. Positions Cys154–Gln255 constitute a BACK domain. 6 Kelch repeats span residues His299–Asn347, Phe348–Gly399, His400–Gly446, Met448–Asp493, Leu495–Asn545, and Lys546–Val594. The tract at residues Phe595 to Ser617 is disordered.

As to quaternary structure, component of the BCR(KLHL9-KLHL13) E3 ubiquitin ligase complex, at least composed of CUL3, KLHL9, KLHL13 and RBX1. Interacts with AURKB.

It functions in the pathway protein modification; protein ubiquitination. In terms of biological role, substrate-specific adapter of a BCR (BTB-CUL3-RBX1) E3 ubiquitin-protein ligase complex required for mitotic progression and cytokinesis. The BCR(KLHL9-KLHL13) E3 ubiquitin ligase complex mediates the ubiquitination of AURKB and controls the dynamic behavior of AURKB on mitotic chromosomes and thereby coordinates faithful mitotic progression and completion of cytokinesis. The sequence is that of Kelch-like protein 9 (Klhl9) from Mus musculus (Mouse).